Consider the following 447-residue polypeptide: Gastrin/cholecystokinin type B receptor (447 aa).

The Extracellular portion of the chain corresponds to 1–57 (MELLKLNRSVQGTGPGPGASLCRPGAPLLNSSSVGNLSCEPPRIRGAGTRELELAIR). 3 N-linked (GlcNAc...) asparagine glycosylation sites follow: Asn-7, Asn-30, and Asn-36. Residues 58-79 (ITLYAVIFLMSVGGNMLIIVVL) traverse the membrane as a helical segment. Residues 80–87 (GLSRRLRT) are Cytoplasmic-facing. A helical membrane pass occupies residues 88 to 109 (VTNAFLLSLAVSDLLLAVACMP). Residues 110-131 (FTLLPNLMGTFIFGTVICKAVS) are Extracellular-facing. An intrachain disulfide couples Cys-127 to Cys-205. A helical membrane pass occupies residues 132–150 (YLMGVSVSVSTLSLVAIAL). Topologically, residues 151-170 (ERYSAICRPLQARVWQTRSH) are cytoplasmic. A helical transmembrane segment spans residues 171–189 (AARVIVATWLLSGLLMVPY). Topologically, residues 190–219 (PVYTVVQPVGPRVLQCVHRWPSARVRQTWS) are extracellular. The helical transmembrane segment at 220–242 (VLLLLLLFFIPGVVMAVAYGLIS) threads the bilayer. Topologically, residues 243–333 (RELYLGLRFD…KLLAKKRVVR (91 aa)) are cytoplasmic. The disordered stretch occupies residues 258–285 (DSQSRVRNQGGLPGAVHQNGRCRPETGA). Residues 334–355 (MLLVIVVLFFLCWLPVYSANTW) traverse the membrane as a helical segment. The Extracellular portion of the chain corresponds to 356–373 (RAFDGPGAHRALSGAPIS). Residues 374–394 (FIHLLSYASACVNPLVYCFMH) form a helical membrane-spanning segment. Over 395–447 (RRFRQACLETCARCCPRPPRARPRALPDEDPPTPSIASLSRLSYTTISTLGPG) the chain is Cytoplasmic. A lipid anchor (S-palmitoyl cysteine) is attached at Cys-408.

This sequence belongs to the G-protein coupled receptor 1 family. Isoform 1 is expressed in brain, pancreas, stomach, the colon cancer cell line LoVo and the T-lymphoblastoma Jurkat, but not in heart, placenta, liver, lung, skeletal muscle, kidney or the stomach cancer cell line AGS. Expressed at high levels in the small cell lung cancer cell line NCI-H510, at lower levels in NCI-H345, NCI-H69 and GLC-28 cell lines, not expressed in GLC-19 cell line. Within the stomach, expressed at high levels in the mucosa of the gastric fundus and at low levels in the antrum and duodenum. Isoform 2 is present in pancreatic cancer cells and colorectal cancer cells, but not in normal pancreas or colonic mucosa. Isoform 3 is expressed in brain, pancreas, stomach, the stomach cancer cell line AGS and the colon cancer cell line LoVo.

It localises to the cell membrane. In terms of biological role, receptor for gastrin and cholecystokinin. The CCK-B receptors occur throughout the central nervous system where they modulate anxiety, analgesia, arousal, and neuroleptic activity. This receptor mediates its action by association with G proteins that activate a phosphatidylinositol-calcium second messenger system. Isoform 2 is constitutively activated and may regulate cancer cell proliferation via a gastrin-independent mechanism. This chain is Gastrin/cholecystokinin type B receptor, found in Homo sapiens (Human).